Here is a 388-residue protein sequence, read N- to C-terminus: Succinate--CoA ligase [ADP-forming] subunit beta (388 aa).

An ATP-grasp domain is found at 9–244; it reads KEIFRSMGVA…LEEEDPKEIE (236 aa). ATP contacts are provided by residues Lys-46, 53 to 55, Glu-99, Cys-102, and Glu-107; that span reads GRG. Asn-199 and Asp-213 together coordinate Mg(2+). Substrate-binding positions include Asn-264 and 321–323; that span reads GIM.

Belongs to the succinate/malate CoA ligase beta subunit family. Heterotetramer of two alpha and two beta subunits. It depends on Mg(2+) as a cofactor.

The enzyme catalyses succinate + ATP + CoA = succinyl-CoA + ADP + phosphate. It carries out the reaction GTP + succinate + CoA = succinyl-CoA + GDP + phosphate. It functions in the pathway carbohydrate metabolism; tricarboxylic acid cycle; succinate from succinyl-CoA (ligase route): step 1/1. In terms of biological role, succinyl-CoA synthetase functions in the citric acid cycle (TCA), coupling the hydrolysis of succinyl-CoA to the synthesis of either ATP or GTP and thus represents the only step of substrate-level phosphorylation in the TCA. The beta subunit provides nucleotide specificity of the enzyme and binds the substrate succinate, while the binding sites for coenzyme A and phosphate are found in the alpha subunit. The sequence is that of Succinate--CoA ligase [ADP-forming] subunit beta from Staphylococcus aureus (strain MRSA252).